The primary structure comprises 340 residues: Functional amyloid subunit FapC (340 aa).

The first 24 residues, 1–24 (MKATMVLTPLALAMAAVLSVSAYA), serve as a signal peptide directing secretion. A FapC_R1 repeat occupies 67–100 (NNASVSGSIKDASGNVGVNVAAGDNNQQANAAAL). Residues 101 to 133 (ASADASFVFGTATASTSVLQSGYGNTLNNYSNP) form a linker 1 region. The FapC_R2 repeat unit spans residues 134 to 167 (NTASLSNSANNVSGNLGVNVAAGNFNQQKNDLAA). Residues 168 to 290 (AVSNGQYSTA…AIVGFKTPVT (123 aa)) form a linker 2 region. The stretch at 291–324 (NNASLSNSLQNVSGNVGVNIAAGGGNQQSNSLSI) is one FapC_R3 repeat. The Cys-X-X-Cys motif lies at 328–331 (CSSC).

It belongs to the FapB/FapC family. The major component of purified amyloid fibrils. Fibrils are resistant to boiling in 2% (weight/vol) SDS and require &gt;90% (vol/vol) formic acid to dissolve. Interacts with FapA in vitro.

The protein localises to the fimbrium. It is found in the secreted. The major functional amyloid subunit in this bacterium. Upon overexpression of the endogenous six-gene locus (fapA-fapF), cells form large clumps during liquid growth, make large amounts of biofilm and produce amyloid fibrils. This is Functional amyloid subunit FapC from Pseudomonas aeruginosa (strain ATCC 15692 / DSM 22644 / CIP 104116 / JCM 14847 / LMG 12228 / 1C / PRS 101 / PAO1).